The chain runs to 169 residues: MKGSRIELGDVTPHNIKQLKRLNQVIFPVSYNDKFYKDVLEVGELAKLAYFNDIAVGAVCCRVDHSQNQKRLYIMTLGCLAPYRRLGIGTKMLNHVLNICEKDGTFDNIYLHVQISNESAIDFYRKFGFEIIETKKNYYKRIEPADAHVLQKNLKVPSGQNAETQKTDN.

One can recognise an N-acetyltransferase domain in the interval 6–155 (IELGDVTPHN…DAHVLQKNLK (150 aa)). Threonine 12 bears the Phosphothreonine mark. Tyrosine 31 is a binding site for substrate. An N6-acetyllysine mark is found at lysine 34 and lysine 37. Residue tyrosine 73 is part of the active site. Residue methionine 75 participates in substrate binding. 77-90 (LGCLAPYRRLGIGT) lines the acetyl-CoA pocket. A Phosphotyrosine modification is found at tyrosine 110. Histidine 112 is an active-site residue. Position 117-126 (117-126 (NESAIDFYRK)) interacts with CoA. The tract at residues 138–141 (YYKR) is substrate. Lysine 140 is subject to N6-acetyllysine.

The protein belongs to the acetyltransferase family. GNAT subfamily. As to quaternary structure, component of the N-terminal acetyltransferase E (NatE) complex at least composed of NAA10, NAA15 and NAA50. Interacts with NAA10. Interacts with NAA15. Predominantly interacts with NAA15 in the N-terminal acetyltransferase A complex (NatA complex); the interactions reduce the acetylation activity of the NatA complex. Component of the N-terminal acetyltransferase E (NatE)/HYPK complex at least composed of NAA10, NAA15, NAA50 and HYPK. Within the complex interacts with NAA15. Its capacity to interact with the NatA complex is reduced by HYPK. Interacts with NAA35.

It is found in the cytoplasm. Its subcellular location is the nucleus. It catalyses the reaction N-terminal L-methionyl-L-alanyl-[protein] + acetyl-CoA = N-terminal N(alpha)-acetyl-L-methionyl-L-alanyl-[protein] + CoA + H(+). The catalysed reaction is N-terminal L-methionyl-L-seryl-[protein] + acetyl-CoA = N-terminal N(alpha)-acetyl-L-methionyl-L-seryl-[protein] + CoA + H(+). The enzyme catalyses N-terminal L-methionyl-L-valyl-[protein] + acetyl-CoA = N-terminal N(alpha)-acetyl-L-methionyl-L-valyl-[protein] + CoA + H(+). It carries out the reaction N-terminal L-methionyl-L-threonyl-[protein] + acetyl-CoA = N-terminal N(alpha)-acetyl-L-methionyl-L-threonyl-[protein] + CoA + H(+). It catalyses the reaction N-terminal L-methionyl-L-lysyl-[protein] + acetyl-CoA = N-terminal N(alpha)-acetyl-L-methionyl-L-lysyl-[protein] + CoA + H(+). The catalysed reaction is N-terminal L-methionyl-L-leucyl-[protein] + acetyl-CoA = N-terminal N(alpha)-acetyl-L-methionyl-L-leucyl-[protein] + CoA + H(+). The enzyme catalyses N-terminal L-methionyl-L-phenylalanyl-[protein] + acetyl-CoA = N-terminal N(alpha)-acetyl-L-methionyl-L-phenylalanyl-[protein] + CoA + H(+). It carries out the reaction N-terminal L-methionyl-L-tyrosyl-[protein] + acetyl-CoA = N-terminal N(alpha)-acetyl-L-methionyl-L-tyrosyl-[protein] + CoA + H(+). Its function is as follows. N-alpha-acetyltransferase that acetylates the N-terminus of proteins that retain their initiating methionine. Has a broad substrate specificity: able to acetylate the initiator methionine of most peptides, except for those with a proline in second position. Also displays N-epsilon-acetyltransferase activity by mediating acetylation of the side chain of specific lysines on proteins. Autoacetylates in vivo. The relevance of N-epsilon-acetyltransferase activity is however unclear: able to acetylate H4 in vitro, but this result has not been confirmed in vivo. Component of N-alpha-acetyltransferase complexes containing NAA10 and NAA15, which has N-alpha-acetyltransferase activity. Does not influence the acetyltransferase activity of NAA10. However, it negatively regulates the N-alpha-acetyltransferase activity of the N-terminal acetyltransferase A complex (also called the NatA complex). The multiprotein complexes probably constitute the major contributor for N-terminal acetylation at the ribosome exit tunnel, with NAA10 acetylating all amino termini that are devoid of methionine and NAA50 acetylating other peptides. Required for sister chromatid cohesion during mitosis by promoting binding of CDCA5/sororin to cohesin: may act by counteracting the function of NAA10. In Mus musculus (Mouse), this protein is N-alpha-acetyltransferase 50.